A 145-amino-acid chain; its full sequence is Granulysin (145 aa).

Residues 1 to 22 (MATWALLLLAAMLLGNPGLVFS) form the signal peptide. The Saposin B-type domain occupies 62-142 (LGRDYRTCLT…EDLRLCIPST (81 aa)). 2 disulfide bridges follow: C69-C132 and C96-C107.

Post-translationally, a 9 kDa form is produced by proteolytic processing of a 15 kDa protein. In terms of tissue distribution, expressed in natural killer and T-cells.

Its subcellular location is the secreted. Its function is as follows. Antimicrobial protein that kills intracellular pathogens. Active against a broad range of microbes, including Gram-positive and Gram-negative bacteria, fungi, and parasites. Kills Mycobacterium tuberculosis. The chain is Granulysin (GNLY) from Homo sapiens (Human).